The primary structure comprises 150 residues: Deoxyuridine 5'-triphosphate nucleotidohydrolase (150 aa).

Substrate contacts are provided by residues 69-71 (RSG), Asn82, and 86-88 (LID).

Belongs to the dUTPase family. Requires Mg(2+) as cofactor.

It catalyses the reaction dUTP + H2O = dUMP + diphosphate + H(+). It functions in the pathway pyrimidine metabolism; dUMP biosynthesis; dUMP from dCTP (dUTP route): step 2/2. In terms of biological role, this enzyme is involved in nucleotide metabolism: it produces dUMP, the immediate precursor of thymidine nucleotides and it decreases the intracellular concentration of dUTP so that uracil cannot be incorporated into DNA. In Chromobacterium violaceum (strain ATCC 12472 / DSM 30191 / JCM 1249 / CCUG 213 / NBRC 12614 / NCIMB 9131 / NCTC 9757 / MK), this protein is Deoxyuridine 5'-triphosphate nucleotidohydrolase.